The sequence spans 555 residues: Bifunctional epoxide hydrolase 2 (555 aa).

The tract at residues 1–224 (MALRAAVFDL…KVTGVQLLQT (224 aa)) is phosphatase. Mg(2+) contacts are provided by D9 and D11. Residue K43 is modified to N6-acetyllysine. Phosphate is bound at residue 123–124 (TN). Mg(2+) is bound at residue D185. 2 positions are modified to N6-acetyllysine: K191 and K215. Positions 235-555 (SALSHGYVLI…ARNPLVDSKL (321 aa)) are epoxide hydrolase. The 273-residue stretch at 259–531 (PAVCLCHGFP…CGHWTQIDKP (273 aa)) folds into the AB hydrolase-1 domain. D335 functions as the Nucleophile in the catalytic mechanism. S370 carries the phosphoserine modification. A substrate-binding site is contributed by Y383. K455 bears the N6-succinyllysine mark. Y466 serves as the catalytic Proton donor. An N6-succinyllysine modification is found at K505. A lipid anchor (S-(15-deoxy-Delta12,14-prostaglandin J2-9-yl)cysteine) is attached at C522. H524 acts as the Proton acceptor in catalysis. A Microbody targeting signal motif is present at residues 553 to 555 (SKL). K554 carries the N6-succinyllysine modification.

The protein belongs to the AB hydrolase superfamily. Epoxide hydrolase family. As to quaternary structure, homodimer. The cofactor is Mg(2+). In terms of processing, the covalent modification of cysteine by 15-deoxy-Delta12,14-prostaglandin-J2 is autocatalytic and reversible. It may occur as an alternative to other cysteine modifications, such as S-nitrosylation and S-palmitoylation.

The protein resides in the cytoplasm. Its subcellular location is the peroxisome. The enzyme catalyses an epoxide + H2O = an ethanediol. The catalysed reaction is (9S,10S)-10-hydroxy-9-(phosphooxy)octadecanoate + H2O = (9S,10S)-9,10-dihydroxyoctadecanoate + phosphate. It carries out the reaction (14R,15S)-epoxy-(5Z,8Z,11Z)-eicosatrienoate + H2O = (14R,15R)-dihydroxy-(5Z,8Z,11Z)-eicosatrienoate. With respect to regulation, inhibited by 1-(1-acetylpiperidin-4-yl)-3-(4-(trifl uoromethoxy)phenyl)urea (TPAU), 1-cyclohexyl-3-dodecylurea (CDU), 12-(3-adamantan-1-yl-ureido)-dodecanoic acid (AUDA), 1-((3S, 5S, 7S)-adamantan-1-yl)-3-(5-(2-(2-ethoxyethoxy) ethoxy)pentyl)urea (AEPU), N-adamantyl-N[']-cyclohexyl urea (ACU), 4-(((1S, 4S)-4-(3-((3S, 5S, 7S)-adamantan-1-yl) ureido)cyclohexyl)oxy)benzoic acid (c-AUCB), 4-(((1R, 4R)-4-(3-((3S, 5S, 7S)-adamantan-1-yl)ureido)cyclohexyl)oxy)benzoic acid (t-AUCB), 4-(((1R, 4R)-4-(3-(4(trifluoromethoxy)phenyl)ureido)cyclohexyl)oxy)benzoic acid (t-TAUCB) and to a lesser extent by 8-(3-((3S, 5S, 7S)-adamantan-1-yl)ureido) octanoic acid (AUOA). Functionally, bifunctional enzyme. The C-terminal domain has epoxide hydrolase activity and acts on epoxides (alkene oxides, oxiranes) and arene oxides. Plays a role in xenobiotic metabolism by degrading potentially toxic epoxides. Also determines steady-state levels of physiological mediators. The N-terminal domain has lipid phosphatase activity, with the highest activity towards threo-9,10-phosphonooxy-hydroxy-octadecanoic acid, followed by erythro-9,10-phosphonooxy-hydroxy-octadecanoic acid, 12-phosphonooxy-octadec-9Z-enoic acid and 12-phosphonooxy-octadec-9E-enoic acid. This is Bifunctional epoxide hydrolase 2 (EPHX2) from Sus scrofa (Pig).